A 119-amino-acid polypeptide reads, in one-letter code: Large ribosomal subunit protein bL17 (119 aa).

This sequence belongs to the bacterial ribosomal protein bL17 family. As to quaternary structure, part of the 50S ribosomal subunit. Contacts protein L32.

The protein is Large ribosomal subunit protein bL17 of Psychrobacter sp. (strain PRwf-1).